The sequence spans 264 residues: Apolipoprotein A-I (264 aa).

Positions 1 to 18 (MKAVVLAVAVLFLTGSQA) are cleaved as a signal peptide. Repeat copies occupy residues 67 to 88 (LNLL…EQLG) and 89 to 110 (PVTR…QEMN). Residues 67-264 (LNLLENWDTF…DEATQKLNTQ (198 aa)) are 10 X approximate tandem repeats. The residue at position 109 (Met109) is a Methionine sulfoxide. The 3; half-length repeat unit spans residues 111-121 (KDLEEVKQKVQ). 3 repeat units span residues 122–143 (PYLD…PKVE), 144–165 (PLGA…KQLV), and 166–187 (PLGE…TKLA). Residues 188 to 207 (PYSDQMRDRLAERLTALRDN) form a 7; truncated repeat. Methionine sulfoxide is present on Met193. Copy 8 of the repeat occupies 208-229 (PKLAEYHARATEHLKKLGEKTK). One copy of the 9; half-length repeat lies at 230–240 (PTLEDLRQGLM). Met240 carries the methionine sulfoxide modification. Copy 10 of the repeat occupies 241–264 (PWLESLKAKALSVLDEATQKLNTQ).

It belongs to the apolipoprotein A1/A4/E family. As to quaternary structure, homodimer. Interacts with APOA1BP and CLU. Component of a sperm activating protein complex (SPAP), consisting of APOA1, an immunoglobulin heavy chain, an immunoglobulin light chain and albumin. Interacts with NDRG1. Interacts with SCGB3A2. Interacts with NAXE and YJEFN3. In terms of processing, glycosylated. Post-translationally, palmitoylated. Phosphorylation sites are present in the extracellular medium.

It is found in the secreted. In terms of biological role, participates in the reverse transport of cholesterol from tissues to the liver for excretion by promoting cholesterol efflux from tissues and by acting as a cofactor for the lecithin cholesterol acyltransferase (LCAT). As part of the SPAP complex, activates spermatozoa motility. This chain is Apolipoprotein A-I (Apoa1), found in Nannospalax galili (Northern Israeli blind subterranean mole rat).